The sequence spans 963 residues: Importin-13 (963 aa).

HEAT repeat units lie at residues 24–54, 56–88, 95–135, 142–179, 194–231, 236–268, 276–325, 330–372, 375–438, 440–476, 487–522, 524–558, 562–600, 603–648, 676–716, 720–754, 761–803, 815–845, 860–893, and 897–931; these read ENVE…QAQV, PQAW…KISR, TDQY…LSMM, AVAD…EFQT, LAVE…SWVQ, LQDC…NAIS, VNTL…ALLD, WQSF…DDIL, EAEK…YEML, AELL…FQSI, VVPG…WLAD, PVMI…CREC, LPPY…LLSA, VEEI…SNLF, PVVV…VKTL, FAPM…VHIF, FPPI…ALKR, VKAV…TELL, EDGR…FALN, and FSLL…QQIL. In terms of domain architecture, Importin N-terminal spans 45 to 111; sequence AQKWLMQAQV…KAQLFTQITR (67 aa).

Belongs to the importin beta family. Interacts with UBC9, RAN, RBM8A, eIF-1A and PAX6. As to expression, expressed in fetal brain, heart, intestine and kidney.

The protein resides in the cytoplasm. Its subcellular location is the nucleus. Functions in nuclear protein import as nuclear transport receptor. Serves as receptor for nuclear localization signals (NLS) in cargo substrates. Is thought to mediate docking of the importin/substrate complex to the nuclear pore complex (NPC) through binding to nucleoporin and the complex is subsequently translocated through the pore by an energy requiring, Ran-dependent mechanism. At the nucleoplasmic side of the NPC, Ran binds to the importin, the importin/substrate complex dissociates and importin is re-exported from the nucleus to the cytoplasm where GTP hydrolysis releases Ran. The directionality of nuclear import is thought to be conferred by an asymmetric distribution of the GTP- and GDP-bound forms of Ran between the cytoplasm and nucleus. Mediates the nuclear import of UBC9, the RBM8A/MAGOH complex, PAX6 and probably other members of the paired homeobox family. Also mediates nuclear export of eIF-1A, and the cytoplasmic release of eIF-1A is triggered by the loading of import substrates onto IPO13. The chain is Importin-13 (IPO13) from Homo sapiens (Human).